Consider the following 92-residue polypeptide: Small ribosomal subunit protein uS19 (92 aa).

This sequence belongs to the universal ribosomal protein uS19 family.

Protein S19 forms a complex with S13 that binds strongly to the 16S ribosomal RNA. This Thermosynechococcus vestitus (strain NIES-2133 / IAM M-273 / BP-1) protein is Small ribosomal subunit protein uS19.